Here is a 382-residue protein sequence, read N- to C-terminus: Dual-specificity RNA methyltransferase RlmN (382 aa).

E95 acts as the Proton acceptor in catalysis. Residues 101 to 348 form the Radical SAM core domain; it reads EDDRGTLCIS…TTVRKTRGDD (248 aa). A disulfide bridge connects residues C108 and C353. [4Fe-4S] cluster is bound by residues C115, C119, and C122. S-adenosyl-L-methionine contacts are provided by residues 179 to 180, S211, 233 to 235, and N310; these read GE and SLH. C353 functions as the S-methylcysteine intermediate in the catalytic mechanism.

Belongs to the radical SAM superfamily. RlmN family. [4Fe-4S] cluster is required as a cofactor.

Its subcellular location is the cytoplasm. It catalyses the reaction adenosine(2503) in 23S rRNA + 2 reduced [2Fe-2S]-[ferredoxin] + 2 S-adenosyl-L-methionine = 2-methyladenosine(2503) in 23S rRNA + 5'-deoxyadenosine + L-methionine + 2 oxidized [2Fe-2S]-[ferredoxin] + S-adenosyl-L-homocysteine. The catalysed reaction is adenosine(37) in tRNA + 2 reduced [2Fe-2S]-[ferredoxin] + 2 S-adenosyl-L-methionine = 2-methyladenosine(37) in tRNA + 5'-deoxyadenosine + L-methionine + 2 oxidized [2Fe-2S]-[ferredoxin] + S-adenosyl-L-homocysteine. Functionally, specifically methylates position 2 of adenine 2503 in 23S rRNA and position 2 of adenine 37 in tRNAs. m2A2503 modification seems to play a crucial role in the proofreading step occurring at the peptidyl transferase center and thus would serve to optimize ribosomal fidelity. In Bordetella parapertussis (strain 12822 / ATCC BAA-587 / NCTC 13253), this protein is Dual-specificity RNA methyltransferase RlmN.